A 44-amino-acid chain; its full sequence is Large ribosomal subunit protein bL34 (44 aa).

The tract at residues 1 to 26 is disordered; the sequence is MQRTLGGTNRKRKRTSGFRARMRTPD. Basic residues predominate over residues 9 to 22; that stretch reads NRKRKRTSGFRARM.

This sequence belongs to the bacterial ribosomal protein bL34 family.

This is Large ribosomal subunit protein bL34 from Trichormus variabilis (strain ATCC 29413 / PCC 7937) (Anabaena variabilis).